Consider the following 606-residue polypeptide: Pickpocket protein 28 (606 aa).

The tract at residues 1-26 is disordered; it reads MRTLTESRRRQSGSSGCKKDSESDDD. The next 2 helical transmembrane spans lie at 66–86 and 490–510; these read IFFG…ISNV and GLLG…FFYI.

The protein belongs to the amiloride-sensitive sodium channel (TC 1.A.6) family. Expressed in water-sensing neurons in taste bristles on the proboscis but not in carbonation-sensing taste peg neurons (at protein level). Expressed in the tracheal system.

The protein localises to the cell membrane. Functionally, osmosensitive ion channel that mediates the cellular and behavioral response to water. Plays an essential role in gustatory water reception. Part of a complex that plays a role in tracheal liquid clearance. Probable role in sodium transport. This Drosophila melanogaster (Fruit fly) protein is Pickpocket protein 28 (ppk28).